Consider the following 633-residue polypeptide: tRNA uridine 5-carboxymethylaminomethyl modification enzyme MnmG (633 aa).

Residue 18-23 participates in FAD binding; that stretch reads GAGHAG. The tract at residues 208–232 is disordered; it reads PRVNGNTIDFDKTEEQPGDKTPNHF. Basic and acidic residues predominate over residues 216–229; the sequence is DFDKTEEQPGDKTP. 279–293 lines the NAD(+) pocket; that stretch reads GPRYCPSIEDKIVRF.

This sequence belongs to the MnmG family. Homodimer. Heterotetramer of two MnmE and two MnmG subunits. FAD serves as cofactor.

The protein resides in the cytoplasm. Its function is as follows. NAD-binding protein involved in the addition of a carboxymethylaminomethyl (cmnm) group at the wobble position (U34) of certain tRNAs, forming tRNA-cmnm(5)s(2)U34. This Lacticaseibacillus paracasei (strain ATCC 334 / BCRC 17002 / CCUG 31169 / CIP 107868 / KCTC 3260 / NRRL B-441) (Lactobacillus paracasei) protein is tRNA uridine 5-carboxymethylaminomethyl modification enzyme MnmG.